We begin with the raw amino-acid sequence, 310 residues long: Alpha/beta hydrolase domain-containing protein 17A (310 aa).

Residues 38 to 61 (VPEPEPGPGGAGAAPSGPLRTSAA) form a disordered region. Residues Ser190, Asp255, and His284 each act as charge relay system in the active site. Ser307 carries the phosphoserine modification.

This sequence belongs to the AB hydrolase superfamily. ABHD17 family. Post-translationally, palmitoylated on cysteine residues located in a cysteine cluster at the N-terminus which promotes membrane localization. Palmitoylation is required for post-synaptic localization and for depalmitoylating activity towards DLG4/PSD95.

Its subcellular location is the cell membrane. The protein resides in the endosome membrane. The protein localises to the cell projection. It is found in the dendritic spine. It localises to the postsynaptic density membrane. It carries out the reaction S-hexadecanoyl-L-cysteinyl-[protein] + H2O = L-cysteinyl-[protein] + hexadecanoate + H(+). Functionally, hydrolyzes fatty acids from S-acylated cysteine residues in proteins. Has depalmitoylating activity towards NRAS. Has depalmitoylating activity towards DLG4/PSD95. May have depalmitoylating activity towars MAP6. The sequence is that of Alpha/beta hydrolase domain-containing protein 17A from Mus musculus (Mouse).